The sequence spans 295 residues: MDMKTTGDDGYFVEERSAETVIARMRDCDDPRLKEIMAVVTRKLHEAVKEIEPTEEEWMKAIHFLTEVGQICNEWRQEWILFSDILGVSMLVDAINHRKPSGASESTVLGPFHVADAPEMPMGANICLDGKGEDMLVTGRILDTDGVPVAGARIDVWQANDEGFYDVQQKGIQPDFNLRGVFVTGEDGRYWFRAAKPKYYPIPDDGPVGQLLRAMGRHPYRPAHLHYIVSAEGFTTLVTHIFDPDDPYIRSDAVFGVKESLLADFQRVEDAQRAQELGFANGWFWSVDHDFVLAR.

The Fe cation site is built by Y165, Y200, H224, and H226.

Belongs to the intradiol ring-cleavage dioxygenase family. Requires Fe(3+) as cofactor.

It carries out the reaction benzene-1,2,4-triol + O2 = maleylacetate + 2 H(+). It functions in the pathway aromatic compound metabolism. Involved in the gamma-resorcylate (2,6-dihydroxybenzoate) catabolism. Catalyzes the conversion of hydroxyquinol to malelylacetate. The polypeptide is Hydroxyquinol 1,2-dioxygenase (Rhizobium sp. (strain MTP-10005)).